Consider the following 532-residue polypeptide: Putative cysteine ligase BshC (532 aa).

A coiled-coil region spans residues 431-451; sequence MAQAKDALAKVDASLVEAAER.

It belongs to the BshC family.

This chain is Putative cysteine ligase BshC, found in Koribacter versatilis (strain Ellin345).